The following is a 441-amino-acid chain: Acidic phosphoprotein (441 aa).

Residues 1–15 (MKAISLGLISSIIFS) constitute a signal peptide (or 24). 2 N-linked (GlcNAc...) asparagine glycosylation sites follow: Asn21 and Asn112. A run of 18 repeats spans residues 186 to 193 (EEDPYLLQ), 194 to 201 (EEDALSLM), 202 to 209 (EYDAETLN), 210 to 217 (EGDAETLN), 218 to 225 (EGDAETLN), 226 to 233 (EYDAGTLN), 234 to 241 (EEDAGTTN), 242 to 249 (EAGEGTTN), 250 to 257 (EEGEGAAN), 258 to 265 (EYDAETLN), 266 to 273 (EYDADTLN), 274 to 281 (EYDAGTLN), 282 to 289 (EYDAGTLN), 290 to 297 (EEEGSTTN), 298 to 305 (EAGEGTSN), 306 to 313 (EAGEGTAN), 353 to 360 (KGNENEGE), and 361 to 368 (QKGNENEG). The segment at 186 to 313 (EEDPYLLQEE…SNEAGEGTAN (128 aa)) is 16 X 8 AA tandem repeats. The interval 232–416 (LNEEDAGTTN…EKEKKKEKKV (185 aa)) is disordered. A compositionally biased stretch (low complexity) spans 238–247 (GTTNEAGEGT). Residues 248-273 (TNEEGEGAANEYDAETLNEYDADTLN) are compositionally biased toward acidic residues. Residues 294-306 (STTNEAGEGTSNE) are compositionally biased toward polar residues. Over residues 312 to 332 (ANDDEELDEEVASIFDDDEHA) the composition is skewed to acidic residues. Residues 349-371 (ENVKKGNENEGEQKGNENEGEQK) show a composition bias toward basic and acidic residues. A 2 X 9 AA tandem repeats region spans residues 353-370 (KGNENEGEQKGNENEGEQ). The segment covering 372–415 (GKKKKAKEKSKKKVKNKPTMTTKKKKKKEKKKKKKEKEKKKEKK) has biased composition (basic residues).

Its subcellular location is the cell membrane. Functionally, during infection, this phosphoprotein probably modulates the structure of the red cell membrane to the advantage of the parasite, although its precise function is not known. In Plasmodium chabaudi, this protein is Acidic phosphoprotein (PCEMA1).